Reading from the N-terminus, the 660-residue chain is Leucine-rich repeat transmembrane protein FLRT2 (660 aa).

Positions 1–35 are cleaved as a signal peptide; the sequence is MGLQTAKWPSHGTFVLKFWLIMSLGLYSHVSKLLA. Cystine bridges form between cysteine 36/cysteine 42 and cysteine 40/cysteine 49. The LRRNT domain maps to 36 to 67; that stretch reads CPSVCRCDRNFVYCNERSLTSVPLGIPEGVTV. Over 36 to 540 the chain is Extracellular; the sequence is CPSVCRCDRN…QTTSHTMGSP (505 aa). 10 LRR repeats span residues 62–87, 88–108, 109–131, 132–157, 159–181, 183–202, 203–228, 229–251, 252–274, and 275–298; these read PEGVTVLYLHNNQINNAGFPAELHNV, QSVHTVYLYGNQLDEFPMNLP, KNVRVLHLQENNIQTISRAALAQ, LLKLEELHLDDNSISTVGVEDGAFRE, ISLKLLFLSKNHLSSVPVGLPVD, QELRVDENRIAVISDMAFQN, LTSLERLIVDGNLLTNKGIADGTFSH, LTKLKEFSIVRNSLSHPPPDLPG, THLIRLYLQDNQINHIPLTAFAN, and LRKLERLDISNNQLRMLTQGVFDH. N-linked (GlcNAc...) asparagine glycosylation occurs at asparagine 202. Disulfide bonds link cysteine 314–cysteine 339 and cysteine 316–cysteine 360. The LRRCT domain maps to 338–361; the sequence is MCQGPEQVRGMAVRELNMNLLSCP. Positions 372-396 are enriched in low complexity; it reads PAPSTVSPTTQSPTVSVPSPSRGSV. Residues 372 to 413 are disordered; that stretch reads PAPSTVSPTTQSPTVSVPSPSRGSVPPAPAPSKLPTIPDWDG. A Fibronectin type-III domain is found at 419–517; that stretch reads PPISERIQLS…ICSEATTHAS (99 aa). Residues 541–561 traverse the membrane as a helical segment; sequence FLLAGLIGGAVIFVLVVLLSV. Residues 562-660 are Cytoplasmic-facing; it reads FCWHMHKKGR…SVPDLEHCHT (99 aa).

Self-associates (via leucine-rich repeats), giving rise to homooligomers. Interacts with FGFR1. Interacts with FGFR2. Interacts (via extracellular domain) with ADGRL1/LPHN1. Interacts (via extracellular domain) with ADGRL3 (via olfactomedin-like domain). Interacts (via extracellular domain) with UNC5D (via the first Ig-like domain). Can also interact (via extracellular domain) with UNC5B, but with much lower affinity. Interacts (via extracellular domain) with FN1. Post-translationally, N-glycosylated. In terms of processing, proteolytic cleavage in the juxtamembrane region gives rise to a soluble ectodomain. Cleavage is probably effected by a metalloprotease. Detected in brain (at protein level).

It localises to the cell membrane. The protein resides in the endoplasmic reticulum membrane. It is found in the synapse. The protein localises to the synaptosome. Its subcellular location is the cell junction. It localises to the focal adhesion. The protein resides in the secreted. It is found in the extracellular space. The protein localises to the extracellular matrix. Its subcellular location is the microsome membrane. Functions in cell-cell adhesion, cell migration and axon guidance. Mediates cell-cell adhesion via its interactions with ADGRL3 and probably also other latrophilins that are expressed at the surface of adjacent cells. May play a role in the migration of cortical neurons during brain development via its interaction with UNC5D. Mediates axon growth cone collapse and plays a repulsive role in neuron guidance via its interaction with UNC5D, and possibly also other UNC-5 family members. Plays a role in fibroblast growth factor-mediated signaling cascades. Required for normal organization of the cardiac basement membrane during embryogenesis, and for normal embryonic epicardium and heart morphogenesis. The sequence is that of Leucine-rich repeat transmembrane protein FLRT2 from Rattus norvegicus (Rat).